The chain runs to 1081 residues: Carbamoyl phosphate synthase large chain (1081 aa).

A carboxyphosphate synthetic domain region spans residues 1–410 (MPKRTDIKTI…SFQKALRGLE (410 aa)). ATP contacts are provided by Arg129, Arg176, Gly182, Gly183, Glu215, Leu217, Glu222, Gly248, Ile249, His250, Gln292, and Glu306. The ATP-grasp 1 domain maps to 133–335 (KEAMTKIGLG…IAKVAAKLAV (203 aa)). Mg(2+)-binding residues include Gln292, Glu306, and Asn308. Mn(2+) is bound by residues Gln292, Glu306, and Asn308. The tract at residues 411 to 558 (VGVDGLDEKS…YEAEHGECEA (148 aa)) is oligomerization domain. The interval 559 to 944 (DPTERKKIMV…ALFKSQLAAG (386 aa)) is carbamoyl phosphate synthetic domain. An ATP-grasp 2 domain is found at 683–878 (QKLLHDLGLR…LAKVAARCMA (196 aa)). Arg719, Arg758, Leu760, Glu765, Gly790, Val791, His792, Ser793, Gln833, and Glu849 together coordinate ATP. Positions 833, 849, and 851 each coordinate Mg(2+). Mn(2+) contacts are provided by Gln833, Glu849, and Asn851. The region spanning 945–1081 (SRLPEKGTVL…YDLQGLHASL (137 aa)) is the MGS-like domain. The allosteric domain stretch occupies residues 945-1081 (SRLPEKGTVL…YDLQGLHASL (137 aa)).

The protein belongs to the CarB family. As to quaternary structure, composed of two chains; the small (or glutamine) chain promotes the hydrolysis of glutamine to ammonia, which is used by the large (or ammonia) chain to synthesize carbamoyl phosphate. Tetramer of heterodimers (alpha,beta)4. Requires Mg(2+) as cofactor. It depends on Mn(2+) as a cofactor.

It carries out the reaction hydrogencarbonate + L-glutamine + 2 ATP + H2O = carbamoyl phosphate + L-glutamate + 2 ADP + phosphate + 2 H(+). It catalyses the reaction hydrogencarbonate + NH4(+) + 2 ATP = carbamoyl phosphate + 2 ADP + phosphate + 2 H(+). It participates in amino-acid biosynthesis; L-arginine biosynthesis; carbamoyl phosphate from bicarbonate: step 1/1. It functions in the pathway pyrimidine metabolism; UMP biosynthesis via de novo pathway; (S)-dihydroorotate from bicarbonate: step 1/3. In terms of biological role, large subunit of the glutamine-dependent carbamoyl phosphate synthetase (CPSase). CPSase catalyzes the formation of carbamoyl phosphate from the ammonia moiety of glutamine, carbonate, and phosphate donated by ATP, constituting the first step of 2 biosynthetic pathways, one leading to arginine and/or urea and the other to pyrimidine nucleotides. The large subunit (synthetase) binds the substrates ammonia (free or transferred from glutamine from the small subunit), hydrogencarbonate and ATP and carries out an ATP-coupled ligase reaction, activating hydrogencarbonate by forming carboxy phosphate which reacts with ammonia to form carbamoyl phosphate. This is Carbamoyl phosphate synthase large chain from Ralstonia nicotianae (strain ATCC BAA-1114 / GMI1000) (Ralstonia solanacearum).